Reading from the N-terminus, the 547-residue chain is Auxin transporter-like protein 3 (547 aa).

Topologically, residues 1 to 74 are cytoplasmic; it reads MASGSSGGGY…DAWFSCASNQ (74 aa). Residues 75-92 form a helical membrane-spanning segment; that stretch reads VAQVLLTLPYSFAQLGMA. The Extracellular segment spans residues 93 to 94; the sequence is SG. The chain crosses the membrane as a helical span at residues 95–115; it reads LLFQLFYGLLGSWTAYLISIL. At 116–151 the chain is on the cytoplasmic side; that stretch reads YLEYRTRKERDKVDFRNHVIQWFEVLDGLLGRHWRN. A helical membrane pass occupies residues 152–172; the sequence is VGLAFNCTFLLFGSVIQLIGC. The Extracellular portion of the chain corresponds to 173–187; that stretch reads ASNIYYINDHLDKRT. The chain crosses the membrane as a helical span at residues 188–208; that stretch reads WTYIFGACCATTVFIPSFHNY. The Cytoplasmic portion of the chain corresponds to 209–211; that stretch reads RIW. A helical transmembrane segment spans residues 212 to 232; it reads SFLGLLMTTYTAWYIAVASLI. At 233 to 247 the chain is on the extracellular side; the sequence is HGQVEGVAHSGPTSI. A helical transmembrane segment spans residues 248–268; that stretch reads VLYFTGATNILYTFGGHAVTV. At 269-281 the chain is on the cytoplasmic side; it reads EIMHAMWRPQKFK. A helical membrane pass occupies residues 282–302; that stretch reads AIYLLATVYVLTLTLPSASAA. The Extracellular segment spans residues 303-329; it reads YWAFGDALLTHSNALALLPRTPWRDAA. Residues 330-350 traverse the membrane as a helical segment; that stretch reads VVLMLIHQFITFGFACTPLYF. Residues 351–371 lie on the Cytoplasmic side of the membrane; sequence VWEKLVGLHGCPSLCKRAAAR. Residues 372 to 392 form a helical membrane-spanning segment; sequence LPVVLPIWFLAIIFPFFGPIN. Residue S393 is a topological domain, extracellular. A helical transmembrane segment spans residues 394 to 414; sequence AVGSLLVSFTVYIIPSLAYMV. Residues 415–440 are Cytoplasmic-facing; it reads TFRSPQSRQNAVERPPRFAGGWTGAY. Residues 441 to 461 form a helical membrane-spanning segment; that stretch reads VINSFVVAWVLVVGFGFGGWA. The Extracellular segment spans residues 462-547; it reads SITNFVHQVD…HHHRHHRHGL (86 aa). N-linked (GlcNAc...) asparagine glycosylation is present at N509.

Belongs to the amino acid/polyamine transporter 2 family. Amino acid/auxin permease (AAAP) (TC 2.A.18.1) subfamily.

The protein resides in the cell membrane. Carrier protein involved in proton-driven auxin influx. May mediate the formation of auxin gradient from developing leaves (site of auxin biosynthesis) to tips. This is Auxin transporter-like protein 3 from Oryza sativa subsp. japonica (Rice).